The sequence spans 317 residues: Inactive serine protease 45 (317 aa).

An N-terminal signal peptide occupies residues 1-35; that stretch reads MATSLRGLDAGPGSLRRWILICFAALLLLPPRPNL. Asn-40 carries an N-linked (GlcNAc...) asparagine glycan. A Peptidase S1 domain is found at 44 to 291; the sequence is PVCGTPWWPD…YTIWIKDQVS (248 aa). Cys-75 and Cys-91 are disulfide-bonded. A glycan (N-linked (GlcNAc...) asparagine) is linked at Asn-110. 3 cysteine pairs are disulfide-bonded: Cys-172–Cys-249, Cys-207–Cys-230, and Cys-239–Cys-267. Asn-272 carries an N-linked (GlcNAc...) asparagine glycan.

The protein belongs to the peptidase S1 family.

The protein localises to the secreted. This chain is Inactive serine protease 45, found in Mus musculus (Mouse).